The primary structure comprises 212 residues: Probable GTP-binding protein EngB (212 aa).

Positions 23 to 197 constitute an EngB-type G domain; sequence TGIEVAFAGR…ERILDGWFGL (175 aa). Residues 31–38, 58–62, 76–79, 143–146, and 176–178 each bind GTP; these read GRSNAGKS, GRTQL, DLPG, TKAD, and FSS. Mg(2+) contacts are provided by serine 38 and threonine 60.

Belongs to the TRAFAC class TrmE-Era-EngA-EngB-Septin-like GTPase superfamily. EngB GTPase family. It depends on Mg(2+) as a cofactor.

Functionally, necessary for normal cell division and for the maintenance of normal septation. The sequence is that of Probable GTP-binding protein EngB from Alteromonas mediterranea (strain DSM 17117 / CIP 110805 / LMG 28347 / Deep ecotype).